The primary structure comprises 344 residues: Pre-mRNA polyadenylation factor fip1 (344 aa).

2 disordered regions span residues 1–99 (MSNA…LSTA) and 230–344 (NYNT…RNRY). The segment covering 28-38 (VTVSNAKSPEQ) has biased composition (polar residues). Over residues 39–50 (ASEESDDSDIEF) the composition is skewed to acidic residues. A compositionally biased stretch (basic and acidic residues) spans 80–92 (QVEKTAVEVKTTE). Positions 243 to 258 (SGAATPNAYVNNNPSS) are enriched in low complexity. The span at 271 to 301 (NITSSAGMTHAQPTHNPTSSYGNGASTNYNA) shows a compositional bias: polar residues. Residues 302–317 (SRPPSNHPHSSNYPSS) show a composition bias toward low complexity.

The protein belongs to the FIP1 family.

The protein resides in the nucleus. Pre-mRNA polyadenylation factor that directly interacts with poly(A) polymerase. This is Pre-mRNA polyadenylation factor fip1 from Schizosaccharomyces pombe (strain 972 / ATCC 24843) (Fission yeast).